The sequence spans 246 residues: MSDKTVKSTNLMAFVATKMLERQEDLDTCTEMQVEKMKTSTKARLRTESSFAPRTWEDAIKDGELLFNGTILQAESPTMTPASVEMKGKKFPIDFAPSNIAPIGQNPIYLSPCIPNFDGNVWEATMYHHRGATLTKTMNCNCFQRTIWCHPNPSRMRLSYAFVLYCRNTKKICGYLIAKQVAGIETGIRKCFRCIKSGFVMATDEISLTILQSIKSGAQLDPYWGNETPDIDKTEAYMLSLREAGP.

The protein belongs to the influenza C viruses NS1 family.

The protein localises to the host cytoplasm. It is found in the host nucleus. In terms of biological role, prevents the establishment of the cellular antiviral state initiated by host RIGI, which normally triggers the antiviral transduction signal that leads to the activation of type I IFN genes by transcription factors IRF3 and IRF7. Also participates in the up-regulation of the splicing of viral mRNAs. The chain is Non-structural protein 1 from Influenza C virus (strain C/Yamagata/1964).